Here is a 327-residue protein sequence, read N- to C-terminus: Ribose operon repressor (327 aa).

Residues 1–56 (MTTIKQVALEAGVSKSTVSRFIAQNGYVSDEAREKIERAIKKLNFRPNLSAQSLKT) enclose the HTH lacI-type domain. The segment at residues 4–23 (IKQVALEAGVSKSTVSRFIA) is a DNA-binding region (H-T-H motif).

Functionally, transcriptional repressor for the ribose rbsDACBK operon. This chain is Ribose operon repressor (rbsR), found in Lactococcus lactis subsp. lactis (strain IL1403) (Streptococcus lactis).